Here is a 498-residue protein sequence, read N- to C-terminus: ATP synthase subunit beta, chloroplastic (498 aa).

An ATP-binding site is contributed by 172-179 (GGAGVGKT).

This sequence belongs to the ATPase alpha/beta chains family. F-type ATPases have 2 components, CF(1) - the catalytic core - and CF(0) - the membrane proton channel. CF(1) has five subunits: alpha(3), beta(3), gamma(1), delta(1), epsilon(1). CF(0) has four main subunits: a(1), b(1), b'(1) and c(9-12).

The protein resides in the plastid. Its subcellular location is the chloroplast thylakoid membrane. The catalysed reaction is ATP + H2O + 4 H(+)(in) = ADP + phosphate + 5 H(+)(out). Produces ATP from ADP in the presence of a proton gradient across the membrane. The catalytic sites are hosted primarily by the beta subunits. This is ATP synthase subunit beta, chloroplastic from Solanum tuberosum (Potato).